Reading from the N-terminus, the 314-residue chain is Ribosomal RNA small subunit methyltransferase H (314 aa).

S-adenosyl-L-methionine-binding positions include 36-38 (GGH), Asp-56, Phe-81, Asp-103, and Gln-110.

The protein belongs to the methyltransferase superfamily. RsmH family.

It is found in the cytoplasm. It carries out the reaction cytidine(1402) in 16S rRNA + S-adenosyl-L-methionine = N(4)-methylcytidine(1402) in 16S rRNA + S-adenosyl-L-homocysteine + H(+). Its function is as follows. Specifically methylates the N4 position of cytidine in position 1402 (C1402) of 16S rRNA. This is Ribosomal RNA small subunit methyltransferase H from Shewanella sediminis (strain HAW-EB3).